We begin with the raw amino-acid sequence, 183 residues long: uncharacterized protein (183 aa).

This is an uncharacterized protein from Acanthamoeba polyphaga (Amoeba).